Here is a 384-residue protein sequence, read N- to C-terminus: MAWSQRIEQALVKRRLDGQYRQRHPTGQADGRTLSVAGHNYLNFSANDYLGLSHDGRVVRAWQQGAERYGVGAGGSAHVTGYRAPQAELEHQLADWLGYRRALLFISGFAANQAVIAAMMAKNDRIFADKLCHASLLEAASLSPATLRRFGHNQPSALAKLLAAEGEGETLVVTEGIFSMDGDRAALKPIHQLARDRDGWLLVDDAHGVGVCGEQGRGSCWQQGVQPELLIVTFGKAFGVSGAALLCSDATAEYLLQFARHLIYSTAMPPAQACAIQAALGCVQQGDDLRQRLAANITRFRQGARGLRGQLASSDSAIQPLIVGDEQKVLGLARRLRDRRCWVTAIRPPTVPPGTSRLRITLSAAHRENDIDHLLEALHATDGE.

Residue Arg-21 coordinates substrate. 108-109 (GF) is a binding site for pyridoxal 5'-phosphate. Residue His-133 participates in substrate binding. Pyridoxal 5'-phosphate-binding residues include Ser-179, His-207, and Thr-233. Residue Lys-236 is modified to N6-(pyridoxal phosphate)lysine. Residue Thr-350 participates in substrate binding.

The protein belongs to the class-II pyridoxal-phosphate-dependent aminotransferase family. BioF subfamily. In terms of assembly, homodimer. Pyridoxal 5'-phosphate is required as a cofactor.

The catalysed reaction is 6-carboxyhexanoyl-[ACP] + L-alanine + H(+) = (8S)-8-amino-7-oxononanoate + holo-[ACP] + CO2. It participates in cofactor biosynthesis; biotin biosynthesis. Functionally, catalyzes the decarboxylative condensation of pimeloyl-[acyl-carrier protein] and L-alanine to produce 8-amino-7-oxononanoate (AON), [acyl-carrier protein], and carbon dioxide. In Erwinia tasmaniensis (strain DSM 17950 / CFBP 7177 / CIP 109463 / NCPPB 4357 / Et1/99), this protein is 8-amino-7-oxononanoate synthase.